The primary structure comprises 110 residues: MAAKFHLKKAKDGQFHFNLHAANGEIILTSELYKAKDSALGGIESVRKNSQRDGAFEVKPANNGKFHFVLKATNGQVVGQSQLYASQANAEAGVQSVKRATPEAGLSDES.

Tandem repeats lie at residues 10–58 and 61–109. The tract at residues 91 to 110 is disordered; that stretch reads EAGVQSVKRATPEAGLSDES.

This sequence belongs to the UPF0339 family. Duplicated subfamily.

This chain is UPF0339 protein PA0329, found in Pseudomonas aeruginosa (strain ATCC 15692 / DSM 22644 / CIP 104116 / JCM 14847 / LMG 12228 / 1C / PRS 101 / PAO1).